The sequence spans 636 residues: Methyl-CpG-binding domain protein 1 (636 aa).

Residues 1-69 enclose the MBD domain; it reads MAESWQDCPA…TLFDFRQGTL (69 aa). The interval 75–113 is disordered; sequence KTHPLAVPSKKKKKPSKPAKTKKQQVGLQRSEVRIETPQ. A compositionally biased stretch (basic residues) spans 83-97; the sequence is SKKKKKPSKPAKTKK. Residues 84-88 carry the Nuclear localization signal motif; it reads KKKKK. Lys117 participates in a covalent cross-link: Glycyl lysine isopeptide (Lys-Gly) (interchain with G-Cter in SUMO2). CXXC-type zinc fingers lie at residues 187-234 and 235-281; these read RMFK…RRCL and RIME…RRCF. Zn(2+) is bound by residues Cys194, Cys197, Cys200, Cys206, Cys209, Cys212, Cys228, Cys233, Cys243, Cys246, Cys249, Cys255, Cys258, Cys261, Cys275, and Cys280. Positions 291 to 314 are disordered; that stretch reads GSKVASQRHSQAPPLPPHPASQYT. Residue Lys293 forms a Glycyl lysine isopeptide (Lys-Gly) (interchain with G-Cter in SUMO2) linkage. The CXXC-type 3 zinc finger occupies 348–396; that stretch reads TNQRQNRKCGACAACLRRMDCGRCDFCCDKPKFGGGNQKRQKCRWRQCL. 8 residues coordinate Zn(2+): Cys356, Cys359, Cys362, Cys368, Cys371, Cys374, Cys390, and Cys395. The disordered stretch occupies residues 407–474; sequence AGSGSGEGAG…GRGSVLPQPD (68 aa). Ser409 carries the post-translational modification Phosphoserine. Glycyl lysine isopeptide (Lys-Gly) (interchain with G-Cter in SUMO2) cross-links involve residues Lys443 and Lys461. Residues Lys520 and Lys559 each participate in a glycyl lysine isopeptide (Lys-Gly) (interchain with G-Cter in SUMO2); alternate cross-link. The interval 543–589 is disordered; it reads QSGFPSKAADPDLSPVKQEPPGPEEDGEEKKDDVSETTPAEEIGGVG. Residues 550-612 are transcriptional repression domain (TRD); the sequence is AADPDLSPVK…RLRDAEAWLP (63 aa).

Interacts with OASL, ATF7IP, ATF7IP2 and BAHD1. Binds CHAF1A and the SUV39H1-CBX5 complex via the MBD domain. Binds MGP via the TRD domain. May be part of the MeCP1 complex. During DNA replication, it recruits SETDB1 to form a S phase-specific complex that facilitates methylation of H3 'Lys-9' during replication-coupled chromatin assembly and is at least composed of the CAF-1 subunit CHAF1A, MBD1 and SETDB1. In terms of assembly, interacts with the Ten-1 ICD form of TENM1. Sumoylated, sumoylation may increase interaction with ATF7IP. In terms of tissue distribution, highly expressed in kidney, liver and brain. Detected at lower levels in heart, lung, skeletal muscle, spleen and testis.

It is found in the nucleus. The protein resides in the nucleus matrix. The protein localises to the nucleus speckle. Its subcellular location is the chromosome. Its function is as follows. Transcriptional repressor that binds CpG islands in promoters where the DNA is methylated at position 5 of cytosine within CpG dinucleotides. Binding is abolished by the presence of 7-mG that is produced by DNA damage by methylmethanesulfonate (MMS). Acts as transcriptional repressor and plays a role in gene silencing by recruiting ATF7IP, which in turn recruits factors such as the histone methyltransferase SETDB1. Probably forms a complex with SETDB1 and ATF7IP that represses transcription and couples DNA methylation and histone 'Lys-9' trimethylation. Isoform 1 can also repress transcription from unmethylated promoters. The chain is Methyl-CpG-binding domain protein 1 from Mus musculus (Mouse).